Reading from the N-terminus, the 747-residue chain is Small G protein signaling modulator 3 (747 aa).

One can recognise a Rab-GAP TBC domain in the interval 111–302; it reads GVPHSMRPQL…RLWDLFFYEG (192 aa). Ser403 is modified (phosphoserine). Residues 412–435 adopt a coiled-coil conformation; that stretch reads EDDLEAMKAKNIKQTELVADLREA. The SH3 domain occupies 477–536; the sequence is GHPRRAKALLDFERHDDDELGFRKNDIITIVSQKDEHCWVGELNGLRGWFPAKFVEVLDE. An RUN domain is found at 552–715; the sequence is GVTDLVRGTL…FAFSLSQDWE (164 aa).

It belongs to the small G protein signaling modulator family. As to quaternary structure, interacts with GJA1. Interaction with GJA1 induces its degradation. Interacts via its RUN domain with the C-terminal region of NF2. Interacts with RAB3A, RAB4A, RAB5A, RAB8A, RAB11A, RAP1A, RAP1B, RAP2A, RAP2B and PDCD6I. No interaction with RAB27A.

It localises to the cytoplasm. Functionally, may play a cooperative role in NF2-mediated growth suppression of cells. This Bos taurus (Bovine) protein is Small G protein signaling modulator 3.